The chain runs to 292 residues: AKT-interacting protein (292 aa).

A compositionally biased stretch (polar residues) spans 1–11; that stretch reads MNPFWSMSTSS. Positions 1 to 63 are disordered; the sequence is MNPFWSMSTS…TSPAPAAQST (63 aa). Over residues 14-23 the composition is skewed to basic and acidic residues; the sequence is KRSEGEEKTL. Ser30 is modified (phosphoserine). A UBC core domain is found at 74-222; it reads YLEYSLLAEF…VVDSVKVCTA (149 aa).

The protein belongs to the ubiquitin-conjugating enzyme family. FTS subfamily. As to quaternary structure, component of the FTS/Hook/FHIP complex (FHF complex), composed of AKTIP/FTS, FHIP1B, and one or more members of the Hook family of proteins HOOK1, HOOK2, and HOOK3. Interacts directly with HOOK1, HOOK2 and HOOK3. The FHF complex associates with the homotypic vesicular sorting complex (the HOPS complex). Also interacts with AKT1. May interact with FHIP1A.

The protein resides in the cytoplasm. It localises to the cell membrane. In terms of biological role, component of the FTS/Hook/FHIP complex (FHF complex). The FHF complex may function to promote vesicle trafficking and/or fusion via the homotypic vesicular protein sorting complex (the HOPS complex). Regulates apoptosis by enhancing phosphorylation and activation of AKT1. Increases release of TNFSF6 via the AKT1/GSK3B/NFATC1 signaling cascade. FHF complex promotes the distribution of AP-4 complex to the perinuclear area of the cell. The chain is AKT-interacting protein from Homo sapiens (Human).